We begin with the raw amino-acid sequence, 626 residues long: Chaperone protein HtpG (626 aa).

The tract at residues 1-339 is a; substrate-binding; the sequence is MSQNQETRGF…SNDLPLNVSR (339 aa). A b region spans residues 340–555; the sequence is EILQDNKITA…NDQMTTQMAK (216 aa). A c region spans residues 556–626; that stretch reads LFAAAGQPVP…FIKRINKLLG (71 aa).

Belongs to the heat shock protein 90 family. As to quaternary structure, homodimer.

It localises to the cytoplasm. Its function is as follows. Molecular chaperone. Has ATPase activity. In Haemophilus influenzae (strain PittGG), this protein is Chaperone protein HtpG.